The following is a 145-amino-acid chain: Arginine repressor (145 aa).

The protein belongs to the ArgR family.

It is found in the cytoplasm. Its pathway is amino-acid biosynthesis; L-arginine biosynthesis [regulation]. Its function is as follows. Regulates arginine biosynthesis genes. The protein is Arginine repressor of Streptococcus equi subsp. zooepidemicus (strain H70).